The sequence spans 293 residues: Phosphatidate cytidylyltransferase (293 aa).

8 helical membrane-spanning segments follow: residues 6–26, 51–71, 73–93, 97–117, 157–177, 195–215, 218–238, and 273–293; these read IISA…GGWY, IAPA…SATV, PHLT…YLLF, MATI…GYLP, LLVT…AYIM, VEGS…GAWY, WPYW…VSLL, and VFTA…LNNL.

It belongs to the CDS family.

It localises to the cell membrane. The catalysed reaction is a 1,2-diacyl-sn-glycero-3-phosphate + CTP + H(+) = a CDP-1,2-diacyl-sn-glycerol + diphosphate. The protein operates within phospholipid metabolism; CDP-diacylglycerol biosynthesis; CDP-diacylglycerol from sn-glycerol 3-phosphate: step 3/3. In Synechocystis sp. (strain ATCC 27184 / PCC 6803 / Kazusa), this protein is Phosphatidate cytidylyltransferase (cdsA).